The sequence spans 387 residues: Peroxisomal membrane protein LPX1 (387 aa).

The interval 385-387 is peroxisomal targeting signal type 1; that stretch reads QKL.

It localises to the peroxisome matrix. In terms of biological role, has acyl esterase, lipase and phospholipase A activity. The polypeptide is Peroxisomal membrane protein LPX1 (LPX1) (Saccharomyces cerevisiae (strain ATCC 204508 / S288c) (Baker's yeast)).